A 146-amino-acid polypeptide reads, in one-letter code: Large ribosomal subunit protein uL24 (146 aa).

The tract at residues 1-33 is disordered; the sequence is MKYNPRVTSSRRRNRKPHFTASSSERRVXMSSP. Residues 9 to 18 are compositionally biased toward basic residues; sequence SSRRRNRKPH.

Belongs to the universal ribosomal protein uL24 family.

This Brassica campestris (Field mustard) protein is Large ribosomal subunit protein uL24 (RPL26).